A 273-amino-acid polypeptide reads, in one-letter code: Undecaprenyl-diphosphatase (273 aa).

7 helical membrane-spanning segments follow: residues 6 to 26, 45 to 65, 90 to 110, 116 to 136, 190 to 210, 222 to 242, and 252 to 272; these read SLLI…LPVS, AKTF…VMFW, LTLI…LLFH, LFNP…LIAA, YAAS…ATAL, GDIP…LIAI, and ISFI…YVVF.

It belongs to the UppP family.

The protein localises to the cell inner membrane. The catalysed reaction is di-trans,octa-cis-undecaprenyl diphosphate + H2O = di-trans,octa-cis-undecaprenyl phosphate + phosphate + H(+). Functionally, catalyzes the dephosphorylation of undecaprenyl diphosphate (UPP). Confers resistance to bacitracin. The chain is Undecaprenyl-diphosphatase from Escherichia coli O127:H6 (strain E2348/69 / EPEC).